Consider the following 289-residue polypeptide: Mitochondrial fission regulator 1-like (289 aa).

At Thr27 the chain carries Phosphothreonine. Phosphoserine is present on residues Ser38, Ser100, Ser107, Ser221, Ser222, Ser235, Ser258, and Ser270.

The protein belongs to the MTFR1 family. In terms of processing, phosphorylated by AMPK. Upon stress, phosphorylation by AMPK is sufficient to induce mitochondrial fragmentation.

The protein resides in the mitochondrion outer membrane. Functionally, mitochondrial protein required for adaptation of miochondrial dynamics to metabolic changes. Regulates mitochondrial morphology at steady state and mediates AMPK-dependent stress-induced mitochondrial fragmentation via the control of OPA1 levels. The chain is Mitochondrial fission regulator 1-like (MTFR1L) from Bos taurus (Bovine).